The primary structure comprises 1048 residues: Protein argonaute 7 (1048 aa).

Positions 1-14 are enriched in basic and acidic residues; sequence MEGEREGVVAKNED. Disordered regions lie at residues 1-50 and 121-141; these read MEGE…GSSG and KAAD…KKPP. Over residues 16 to 37 the composition is skewed to gly residues; it reads AGGGGGGLGTGGNGGGGGGGSA. A compositionally biased stretch (basic residues) spans 131–141; it reads MWKHRPSKKPP. In terms of domain architecture, PAZ spans 422–530; sequence KRCDFLKDLP…VPMELCVVCE (109 aa). Residues 709 to 1017 enclose the Piwi domain; the sequence is LLICVMERRH…AAYRGRLYLE (309 aa).

This sequence belongs to the argonaute family. Ago subfamily. Expressed in the reproductive shoot apex.

Its function is as follows. Involved in the RNA silencing pathway. May bind to short RNAs such as microRNAs (miRNAs) or short interfering RNAs (siRNAs), and represses the translation of mRNAs which are complementary to them. Regulates shoot apical meristem (SAM) initiation and maintenance and leaf polarization through the trans-acting siRNAS (ta-siRNAs) pathway which probably modulates the expression of the ARF2, ARF3, ARF4, ARF14 and ARF15 genes. The chain is Protein argonaute 7 (AGO7) from Oryza sativa subsp. japonica (Rice).